The following is a 105-amino-acid chain: Chloroacetanilide N-alkylformylase 1, ferredoxin component (105 aa).

The region spanning 2-105 (PTIIVTTRDG…GLRVAIAPED (104 aa)) is the 2Fe-2S ferredoxin-type domain. 4 residues coordinate [2Fe-2S] cluster: Cys40, Cys46, Cys49, and Cys86.

It belongs to the adrenodoxin/putidaredoxin family. As to quaternary structure, the chloroacetanilide N-alkylformylase multicomponent enzyme system is composed of an oxygenase component (CndA) and an electron transfer component formed by a ferredoxin reductase (CndC1) and a ferredoxin (CndB1). In vitro, chloroacetanilide N-alkylformylase assays in which CndB1 is substituted for CndB2 demonstrate that the two enzymes possess nearly identical activities. Requires [2Fe-2S] cluster as cofactor.

In terms of biological role, component of the chloroacetanilide N-alkylformylase multicomponent enzyme system involved in the degradation of chloroacetanilide herbicides (N-alkoxyalkyl-N-chloroacetyl-substituted aniline derivatives). In vitro, functions as an intermediate electron transfer protein. This chain is Chloroacetanilide N-alkylformylase 1, ferredoxin component, found in Rhizorhabdus wittichii (strain DC-6 / KACC 16600) (Sphingomonas wittichii).